The chain runs to 274 residues: 2,3,4,5-tetrahydropyridine-2,6-dicarboxylate N-succinyltransferase (274 aa).

Substrate contacts are provided by Arg107 and Asp144.

Belongs to the transferase hexapeptide repeat family. Homotrimer.

The protein localises to the cytoplasm. It carries out the reaction (S)-2,3,4,5-tetrahydrodipicolinate + succinyl-CoA + H2O = (S)-2-succinylamino-6-oxoheptanedioate + CoA. The protein operates within amino-acid biosynthesis; L-lysine biosynthesis via DAP pathway; LL-2,6-diaminopimelate from (S)-tetrahydrodipicolinate (succinylase route): step 1/3. The protein is 2,3,4,5-tetrahydropyridine-2,6-dicarboxylate N-succinyltransferase of Cereibacter sphaeroides (strain ATCC 17023 / DSM 158 / JCM 6121 / CCUG 31486 / LMG 2827 / NBRC 12203 / NCIMB 8253 / ATH 2.4.1.) (Rhodobacter sphaeroides).